A 522-amino-acid chain; its full sequence is Glutamate--cysteine ligase (522 aa).

The protein belongs to the glutamate--cysteine ligase type 1 family. Type 1 subfamily.

It catalyses the reaction L-cysteine + L-glutamate + ATP = gamma-L-glutamyl-L-cysteine + ADP + phosphate + H(+). It functions in the pathway sulfur metabolism; glutathione biosynthesis; glutathione from L-cysteine and L-glutamate: step 1/2. In Shewanella halifaxensis (strain HAW-EB4), this protein is Glutamate--cysteine ligase.